We begin with the raw amino-acid sequence, 430 residues long: N-lysine methyltransferase SMYD2-A (430 aa).

Residues 5-239 (EGLERFDSPG…AGDEVFTSYI (235 aa)) form the SET domain. 15–17 (KGR) provides a ligand contact to S-adenosyl-L-methionine. Residues Cys50, Cys53, Cys63, Cys66, Cys72, Cys76, His84, and Cys88 each contribute to the Zn(2+) site. The MYND-type zinc finger occupies 50–88 (CDFCFARKEGLSKCGKCKQAFYCNVDCQKGDWPMHKLEC). S-adenosyl-L-methionine contacts are provided by residues His135, 204-205 (NH), and 256-258 (YFF).

This sequence belongs to the class V-like SAM-binding methyltransferase superfamily.

It is found in the cytoplasm. The protein localises to the cytosol. It localises to the nucleus. It catalyses the reaction L-lysyl(4)-[histone H3] + 3 S-adenosyl-L-methionine = N(6),N(6),N(6)-trimethyl-L-lysyl(4)-[histone H3] + 3 S-adenosyl-L-homocysteine + 3 H(+). It carries out the reaction L-lysyl-[protein] + S-adenosyl-L-methionine = N(6)-methyl-L-lysyl-[protein] + S-adenosyl-L-homocysteine + H(+). Protein-lysine N-methyltransferase that methylates both histones and non-histone proteins, including p53/TP53 and RB1. Specifically trimethylates histone H3 'Lys-4' (H3K4me3) in vivo. The activity requires interaction with HSP90alpha. Shows even higher methyltransferase activity on p53/TP53. Monomethylates 'Lys-370' of p53/TP53, leading to decreased DNA-binding activity and subsequent transcriptional regulation activity of p53/TP53. Monomethylates RB1 at 'Lys-860'. In Xenopus laevis (African clawed frog), this protein is N-lysine methyltransferase SMYD2-A (smyd2-a).